A 432-amino-acid chain; its full sequence is Serine hydroxymethyltransferase (432 aa).

Residues Leu-131 and Gly-135–Leu-137 contribute to the (6S)-5,6,7,8-tetrahydrofolate site. Lys-240 is subject to N6-(pyridoxal phosphate)lysine.

The protein belongs to the SHMT family. Homodimer. Pyridoxal 5'-phosphate is required as a cofactor.

It localises to the cytoplasm. The enzyme catalyses (6R)-5,10-methylene-5,6,7,8-tetrahydrofolate + glycine + H2O = (6S)-5,6,7,8-tetrahydrofolate + L-serine. Its pathway is one-carbon metabolism; tetrahydrofolate interconversion. It functions in the pathway amino-acid biosynthesis; glycine biosynthesis; glycine from L-serine: step 1/1. Its function is as follows. Catalyzes the reversible interconversion of serine and glycine with tetrahydrofolate (THF) serving as the one-carbon carrier. This reaction serves as the major source of one-carbon groups required for the biosynthesis of purines, thymidylate, methionine, and other important biomolecules. Also exhibits THF-independent aldolase activity toward beta-hydroxyamino acids, producing glycine and aldehydes, via a retro-aldol mechanism. The polypeptide is Serine hydroxymethyltransferase (Acidiphilium cryptum (strain JF-5)).